A 374-amino-acid polypeptide reads, in one-letter code: uncharacterized protein (374 aa).

Residues 1–21 (MSIISRVCIPCAVLLFAQLHA) form the signal peptide. The Fibronectin type-III domain occupies 22 to 102 (KELVHVSQLK…ASASAWTSLS (81 aa)).

This is an uncharacterized protein from Treponema pallidum (strain Nichols).